The sequence spans 138 residues: Large ribosomal subunit protein bL12c (138 aa).

Belongs to the bacterial ribosomal protein bL12 family. As to quaternary structure, homodimer. Part of the ribosomal stalk of the 50S ribosomal subunit. Forms a multimeric L10(L12)X complex, where L10 forms an elongated spine to which 2 to 4 L12 dimers bind in a sequential fashion. Binds GTP-bound translation factors.

It is found in the plastid. Functionally, forms part of the ribosomal stalk which helps the ribosome interact with GTP-bound translation factors. Is thus essential for accurate translation. This is Large ribosomal subunit protein bL12c from Euglena longa (Euglenophycean alga).